Reading from the N-terminus, the 505-residue chain is Mannosylglucosyl-3-phosphoglycerate synthase (505 aa).

In terms of assembly, monomer in solution.

The enzyme catalyses (2R)-2-O-(alpha-D-glucopyranosyl)-3-phospho-glycerate + GDP-alpha-D-mannose = (2R)-2-O-[alpha-D-mannopyranosyl-(1-&gt;2)-alpha-D-glucopyranosyl]-3-phospho-glycerate + GDP + H(+). Not strictly dependent on divalent cations, but the presence of Mn(2+), Ca(2+), Mg(2+) or Co(2+) stimulates activity. Involved in the biosynthesis of the compatible solute mannosylglucosylglycerate through a phosphorylating pathway. Catalyzes the conversion of glucosyl-3-phosphoglycerate (GPG) to mannosylglucosyl-3-phosphoglycerate (MGPG). This chain is Mannosylglucosyl-3-phosphoglycerate synthase, found in Petrotoga mobilis (strain DSM 10674 / SJ95).